The primary structure comprises 244 residues: 1-(5-phosphoribosyl)-5-[(5-phosphoribosylamino)methylideneamino] imidazole-4-carboxamide isomerase (244 aa).

Residue Asp8 is the Proton acceptor of the active site. Asp129 (proton donor) is an active-site residue.

Belongs to the HisA/HisF family.

The protein resides in the cytoplasm. It carries out the reaction 1-(5-phospho-beta-D-ribosyl)-5-[(5-phospho-beta-D-ribosylamino)methylideneamino]imidazole-4-carboxamide = 5-[(5-phospho-1-deoxy-D-ribulos-1-ylimino)methylamino]-1-(5-phospho-beta-D-ribosyl)imidazole-4-carboxamide. The protein operates within amino-acid biosynthesis; L-histidine biosynthesis; L-histidine from 5-phospho-alpha-D-ribose 1-diphosphate: step 4/9. The polypeptide is 1-(5-phosphoribosyl)-5-[(5-phosphoribosylamino)methylideneamino] imidazole-4-carboxamide isomerase (Geobacter sulfurreducens (strain ATCC 51573 / DSM 12127 / PCA)).